A 763-amino-acid chain; its full sequence is Phosphoglycerol transferase I (763 aa).

A run of 4 helical transmembrane segments spans residues 1–21, 26–46, 77–97, and 108–128; these read MSEL…AWKA, WWFA…ITLF, ILPG…LGWI, and FGYS…SPAF.

Belongs to the OpgB family.

The protein resides in the cell inner membrane. The catalysed reaction is a phosphatidylglycerol + a membrane-derived-oligosaccharide D-glucose = a 1,2-diacyl-sn-glycerol + a membrane-derived-oligosaccharide 6-(glycerophospho)-D-glucose.. It participates in glycan metabolism; osmoregulated periplasmic glucan (OPG) biosynthesis. Transfers a phosphoglycerol residue from phosphatidylglycerol to the membrane-bound nascent glucan backbones. The protein is Phosphoglycerol transferase I of Escherichia coli (strain ATCC 8739 / DSM 1576 / NBRC 3972 / NCIMB 8545 / WDCM 00012 / Crooks).